The sequence spans 342 residues: MIKTCIVGASGYTGAELASLIHRHPRFELNALYVSAKSQDADKKLGDVHGYLFGQINLPLIPLTDDVLHSLSNEMDVIFLATPHEASHDWMPVLSSGKAKVFDLSGAFRLKDQQVFADYYGFAHEQAASLKQAVYGLADWFAEDIKSADIIAVPGCYPTASLSALKPLHEAGLIADGHLPIINAVSGVSGAGRKAAMGSSFCEVSLQAYGVLGHRHQPEISAYLGREVIFTPHLGNFKRGILATITVKVNADVDAGAVANAFSHAYQNHPIVRIRDTWPKLDDVVGTPHCDLFWKLDTQKGYLVVTSAIDNLLKGAASQAVQCANLRFGFASQLGLVHEVSA.

Residue Cys-156 is part of the active site.

The protein belongs to the NAGSA dehydrogenase family. Type 1 subfamily.

The protein localises to the cytoplasm. The enzyme catalyses N-acetyl-L-glutamate 5-semialdehyde + phosphate + NADP(+) = N-acetyl-L-glutamyl 5-phosphate + NADPH + H(+). It participates in amino-acid biosynthesis; L-arginine biosynthesis; N(2)-acetyl-L-ornithine from L-glutamate: step 3/4. Its function is as follows. Catalyzes the NADPH-dependent reduction of N-acetyl-5-glutamyl phosphate to yield N-acetyl-L-glutamate 5-semialdehyde. This chain is N-acetyl-gamma-glutamyl-phosphate reductase, found in Pseudoalteromonas atlantica (strain T6c / ATCC BAA-1087).